A 118-amino-acid chain; its full sequence is MQHTLTRTASLPERSSSAHSAATALPALRRPPDSCETLVPLLCIFWFVFVSMSPLPPARANKSDNKGLISADRNNKATLLLTIPRCTSKSYTNDLSPLKMTLLSAGKHPRPFRQEHRC.

A compositionally biased stretch (polar residues) spans 1–20 (MQHTLTRTASLPERSSSAHS). Residues 1-26 (MQHTLTRTASLPERSSSAHSAATALP) are disordered. The chain crosses the membrane as a helical span at residues 38 to 58 (LVPLLCIFWFVFVSMSPLPPA).

The protein localises to the membrane. Functionally, overexpression confers resistance to the antimicrobial peptide MiAMP1. In Saccharomyces cerevisiae (strain ATCC 204508 / S288c) (Baker's yeast), this protein is Protein YLR162W.